We begin with the raw amino-acid sequence, 61 residues long: Protein A40 homolog (61 aa).

Topologically, residues 1 to 11 are cytoplasmic; sequence MTMNKPKTNYA. A helical; Signal-anchor for type II membrane protein membrane pass occupies residues 12-32; sequence GYACCVICGLIVGIIFTATLL. Over 33-61 the chain is Extracellular; that stretch reads KAVERKLIHTPLIDKTIKDAYIREDCPTD.

Belongs to the poxviridae A40 protein family.

It is found in the host membrane. The sequence is that of Protein A40 homolog (A45R) from Homo sapiens (Human).